The sequence spans 226 residues: Phosphoribosyl-dephospho-CoA transferase (226 aa).

Residues aspartate 148 and aspartate 150 contribute to the active site.

The protein belongs to the MdcG family.

It carries out the reaction apo-[malonate decarboxylase ACP] + 2'-(5''-triphospho-alpha-D-ribosyl)-3'-dephospho-CoA = holo-[malonate decarboxylase ACP] + diphosphate. Transfers 2'-(5-triphosphoribosyl)-3'-dephosphocoenzyme-A to the apo-[acyl-carrier-protein] of the malonate decarboxylase to yield holo-[acyl-carrier-protein]. This Bradyrhizobium diazoefficiens (strain JCM 10833 / BCRC 13528 / IAM 13628 / NBRC 14792 / USDA 110) protein is Phosphoribosyl-dephospho-CoA transferase.